Here is a 324-residue protein sequence, read N- to C-terminus: tRNA dimethylallyltransferase (324 aa).

An ATP-binding site is contributed by 17-24 (GPTASGKT). 19–24 (TASGKT) provides a ligand contact to substrate. Interaction with substrate tRNA stretches follow at residues 42-45 (DSAL), 166-170 (QRIQR), 251-256 (RCVGYR), and 284-291 (KRQITWLR).

This sequence belongs to the IPP transferase family. In terms of assembly, monomer. The cofactor is Mg(2+).

The catalysed reaction is adenosine(37) in tRNA + dimethylallyl diphosphate = N(6)-dimethylallyladenosine(37) in tRNA + diphosphate. Its function is as follows. Catalyzes the transfer of a dimethylallyl group onto the adenine at position 37 in tRNAs that read codons beginning with uridine, leading to the formation of N6-(dimethylallyl)adenosine (i(6)A). The chain is tRNA dimethylallyltransferase from Burkholderia orbicola (strain MC0-3).